The following is a 318-amino-acid chain: Taste receptor type 2 member 60 (318 aa).

Residues 1–7 (MNGDHMV) are Extracellular-facing. The chain crosses the membrane as a helical span at residues 8-28 (LGSSVTDKKAIILVTILLLLR). Residues 29-40 (LVAIAGNGFITA) lie on the Cytoplasmic side of the membrane. The helical transmembrane segment at 41 to 61 (ALGVEWVLRRMLLPCDKLLVS) threads the bilayer. At 62–88 (LGASRFCLQSVVMGKTIYVFLHPMAFP) the chain is on the extracellular side. Residues 89–109 (YNPVLQFLAFQWDFLNAATLW) form a helical membrane-spanning segment. The Cytoplasmic segment spans residues 110–128 (SSTWLSVFYCVKIATFTHP). A helical membrane pass occupies residues 129–149 (VFFWLKHKLSGWLPWMLFSSV). Topologically, residues 150–183 (GLSSFTTILFFIGNHRMYQNYLRNHLQPWNVTGD) are extracellular. Residue asparagine 179 is glycosylated (N-linked (GlcNAc...) asparagine). The helical transmembrane segment at 184 to 204 (SIRSYCEKFYLFPLKMITWTM) threads the bilayer. Residues 205 to 234 (PTAVFFICMILLITSLGRHRKKALLTTSGF) lie on the Cytoplasmic side of the membrane. The helical transmembrane segment at 235–255 (REPSVQAHIKALLALLSFAML) threads the bilayer. Residues 256-264 (FISYFLSLV) lie on the Extracellular side of the membrane. A helical membrane pass occupies residues 265–285 (FSAAGIFPPLDFKFWVWESVI). Topologically, residues 286-318 (YLCAAVHPIILLFSNCRLRAVLKSRRSSRCGTP) are cytoplasmic.

The protein belongs to the G-protein coupled receptor T2R family. Expressed in subsets of taste receptor cells of the tongue and exclusively in gustducin-positive cells.

The protein localises to the membrane. Functionally, receptor that may play a role in the perception of bitterness and is gustducin-linked. May play a role in sensing the chemical composition of the gastrointestinal content. The activity of this receptor may stimulate alpha gustducin, mediate PLC-beta-2 activation and lead to the gating of TRPM5. The chain is Taste receptor type 2 member 60 (TAS2R60) from Homo sapiens (Human).